We begin with the raw amino-acid sequence, 346 residues long: NADH-ubiquinone oxidoreductase chain 2 (346 aa).

10 helical membrane passes run 25-45, 52-72, 95-115, 124-144, 149-169, 178-198, 200-220, 242-262, 274-294, and 326-346; these read HWIL…PLIS, AIEA…LILF, CLML…HFWF, LITA…LLLL, LNTT…GWMG, ILAF…SYNP, LTIL…LSLA, ATVM…GFMP, EMTP…FFYL, and AILT…ITML.

Belongs to the complex I subunit 2 family. In terms of assembly, core subunit of respiratory chain NADH dehydrogenase (Complex I) which is composed of 45 different subunits.

The protein resides in the mitochondrion inner membrane. It carries out the reaction a ubiquinone + NADH + 5 H(+)(in) = a ubiquinol + NAD(+) + 4 H(+)(out). Its function is as follows. Core subunit of the mitochondrial membrane respiratory chain NADH dehydrogenase (Complex I) which catalyzes electron transfer from NADH through the respiratory chain, using ubiquinone as an electron acceptor. Essential for the catalytic activity and assembly of complex I. This is NADH-ubiquinone oxidoreductase chain 2 (MT-ND2) from Gallus gallus (Chicken).